We begin with the raw amino-acid sequence, 73 residues long: Putative antitoxin M1627_0365 (73 aa).

The protein belongs to the UPF0330 family.

Functionally, possibly the antitoxin component of a type II toxin-antitoxin (TA) system. This Saccharolobus islandicus (strain M.16.27) (Sulfolobus islandicus) protein is Putative antitoxin M1627_0365.